A 151-amino-acid polypeptide reads, in one-letter code: 16.9 kDa class I heat shock protein 1 (151 aa).

A sHSP domain is found at 37–151 (ETAAFANARV…PEVKAIEISG (115 aa)).

This sequence belongs to the small heat shock protein (HSP20) family. As to quaternary structure, may form oligomeric structures.

The protein resides in the cytoplasm. In Triticum aestivum (Wheat), this protein is 16.9 kDa class I heat shock protein 1 (hsp16.9A).